Reading from the N-terminus, the 464-residue chain is ATP synthase subunit beta 1 (464 aa).

Residue 153–160 (GGAGVGKT) coordinates ATP.

Belongs to the ATPase alpha/beta chains family. As to quaternary structure, F-type ATPases have 2 components, CF(1) - the catalytic core - and CF(0) - the membrane proton channel. CF(1) has five subunits: alpha(3), beta(3), gamma(1), delta(1), epsilon(1). CF(0) has three main subunits: a(1), b(2) and c(9-12). The alpha and beta chains form an alternating ring which encloses part of the gamma chain. CF(1) is attached to CF(0) by a central stalk formed by the gamma and epsilon chains, while a peripheral stalk is formed by the delta and b chains.

It localises to the cell inner membrane. It catalyses the reaction ATP + H2O + 4 H(+)(in) = ADP + phosphate + 5 H(+)(out). In terms of biological role, produces ATP from ADP in the presence of a proton gradient across the membrane. The catalytic sites are hosted primarily by the beta subunits. The sequence is that of ATP synthase subunit beta 1 from Burkholderia mallei (strain SAVP1).